The sequence spans 180 residues: Hypoxanthine-guanine phosphoribosyltransferase (180 aa).

The diphosphate site is built by Lys43 and Gly44. Residues Glu99 and Asp100 each coordinate Mg(2+). Catalysis depends on Asp103, which acts as the Proton acceptor. GMP contacts are provided by residues Lys131, 152–153, and Asp159; that span reads FI. Arg165 lines the diphosphate pocket.

Belongs to the purine/pyrimidine phosphoribosyltransferase family. The cofactor is Mg(2+).

The protein localises to the cytoplasm. It carries out the reaction IMP + diphosphate = hypoxanthine + 5-phospho-alpha-D-ribose 1-diphosphate. The catalysed reaction is GMP + diphosphate = guanine + 5-phospho-alpha-D-ribose 1-diphosphate. The protein operates within purine metabolism; IMP biosynthesis via salvage pathway; IMP from hypoxanthine: step 1/1. It functions in the pathway purine metabolism; GMP biosynthesis via salvage pathway; GMP from guanine: step 1/1. Its function is as follows. Purine salvage pathway enzyme that catalyzes the transfer of the ribosyl-5-phosphate group from 5-phospho-alpha-D-ribose 1-diphosphate (PRPP) to the N9 position of the 6-oxopurines hypoxanthine and guanine to form the corresponding ribonucleotides IMP (inosine 5'-monophosphate) and GMP (guanosine 5'-monophosphate), with the release of PPi. This is Hypoxanthine-guanine phosphoribosyltransferase (hpt) from Streptococcus mutans serotype c (strain ATCC 700610 / UA159).